The sequence spans 410 residues: uncharacterized protein (410 aa).

The next 12 membrane-spanning stretches (helical) occupy residues 27-47, 63-83, 97-117, 118-138, 145-165, 180-200, 228-248, 254-274, 293-313, 316-332, 355-375, and 378-398; these read ILAL…VQSI, SLAL…TGPL, LFIA…ISIV, LLRA…MTYI, NSLS…GFLG, ISLM…LYFL, VLFF…TIFN, LMLE…TIYL, NNIL…TQYN, FIII…FFAS, YLFF…FFWF, and QWLG…FLSF.

It belongs to the major facilitator superfamily.

It is found in the cell membrane. This is an uncharacterized protein from Buchnera aphidicola subsp. Acyrthosiphon pisum (strain APS) (Acyrthosiphon pisum symbiotic bacterium).